The chain runs to 164 residues: uncharacterized protein (164 aa).

Positions 26-158 (YAGFWVRFWA…DYIADTTVVH (133 aa)) constitute an RDD domain. 2 helical membrane-spanning segments follow: residues 35-55 (AFLL…SPLF) and 66-86 (MFTF…YFAL).

The protein localises to the cell membrane. This is an uncharacterized protein from Bacillus subtilis (strain 168).